The chain runs to 73 residues: Large ribosomal subunit protein bL31 (73 aa).

Zn(2+) is bound by residues C16, C18, C37, and C40.

It belongs to the bacterial ribosomal protein bL31 family. Type A subfamily. In terms of assembly, part of the 50S ribosomal subunit. The cofactor is Zn(2+).

In terms of biological role, binds the 23S rRNA. The chain is Large ribosomal subunit protein bL31 from Hamiltonella defensa subsp. Acyrthosiphon pisum (strain 5AT).